The primary structure comprises 125 residues: Small ribosomal subunit protein uS12 (125 aa).

A 3-methylthioaspartic acid modification is found at Asp89.

This sequence belongs to the universal ribosomal protein uS12 family. Part of the 30S ribosomal subunit. Contacts proteins S8 and S17. May interact with IF1 in the 30S initiation complex.

In terms of biological role, with S4 and S5 plays an important role in translational accuracy. Functionally, interacts with and stabilizes bases of the 16S rRNA that are involved in tRNA selection in the A site and with the mRNA backbone. Located at the interface of the 30S and 50S subunits, it traverses the body of the 30S subunit contacting proteins on the other side and probably holding the rRNA structure together. The combined cluster of proteins S8, S12 and S17 appears to hold together the shoulder and platform of the 30S subunit. This Clostridium botulinum (strain ATCC 19397 / Type A) protein is Small ribosomal subunit protein uS12.